Reading from the N-terminus, the 448-residue chain is UPF0053 protein sll0260 (448 aa).

One can recognise a CNNM transmembrane domain in the interval 2 to 203 (FSSSVELELF…AQAGMIDEAE (202 aa)). A run of 4 helical transmembrane segments spans residues 11–31 (FFIF…IAIV), 62–82 (FLSA…AVGG), 106–126 (LSIS…GELV), and 142–162 (VAPA…LLGV). 2 consecutive CBS domains span residues 222-281 (MTPR…GQKI) and 286-345 (IVQP…NDDE).

The protein belongs to the UPF0053 family.

The protein resides in the cell membrane. In Synechocystis sp. (strain ATCC 27184 / PCC 6803 / Kazusa), this protein is UPF0053 protein sll0260.